The sequence spans 946 residues: Protein translocase subunit SecA (946 aa).

Residues Gln-87, 105–109 (GEGKT), and Asp-524 contribute to the ATP site. Disordered regions lie at residues 872–892 (PEQPRELPPMEVHKMDPNTGE) and 904–946 (PADT…GRYA). Positions 907 to 917 (TVEKSERDPNR) are enriched in basic and acidic residues. Positions 930, 932, 941, and 942 each coordinate Zn(2+). Over residues 936–946 (KKYKHCHGRYA) the composition is skewed to basic residues.

It belongs to the SecA family. As to quaternary structure, monomer and homodimer. Part of the essential Sec protein translocation apparatus which comprises SecA, SecYEG and auxiliary proteins SecDF-YajC and YidC. Zn(2+) is required as a cofactor.

It is found in the cell inner membrane. The protein resides in the cytoplasm. It carries out the reaction ATP + H2O + cellular proteinSide 1 = ADP + phosphate + cellular proteinSide 2.. Part of the Sec protein translocase complex. Interacts with the SecYEG preprotein conducting channel. Has a central role in coupling the hydrolysis of ATP to the transfer of proteins into and across the cell membrane, serving both as a receptor for the preprotein-SecB complex and as an ATP-driven molecular motor driving the stepwise translocation of polypeptide chains across the membrane. This is Protein translocase subunit SecA from Rhodopseudomonas palustris (strain BisB5).